The following is a 329-amino-acid chain: MPRGSALSDTERAQLDVMKLLNVSLHEMSRKISRSRHCIREYLKDPVSYGTSKRAPRRKALSVRDERNVIRAASNSCKTARDIRNELQLSASKRTILNVIKRSGVIVRQKLRPAPLLSADHKLKRLEFAKNNMGTNWSKVVFSDEKKFNLDGPDGCRYYWRDLRKEPMVFSRRNFGGGTVMVWGAFTEKKKLEIQFVSSKMNSTDYQNVLELELSKYLRHYSRKDFRFQQDNATIHVSNSTRDYFKLKKINLLDWPARSPDLNPIENLWGILVRIVYAQNKTYPTVASLKQGILDAWKSIPDNQLKSLVRSMEDRLIEIIRTQGNPINY.

Residues 2–135 (PRGSALSDTE…LEFAKNNMGT (134 aa)) mediate DNA binding.

This sequence belongs to the transposase 5 family. In terms of assembly, homodimer or homotetramer.

Its subcellular location is the nucleus. Binds specifically to the terminal nucleotides of the TC3 inverted repeat. Its expression results in frequent excision and transposition of endogenous TC3 elements. TC3 transposase acts by making double strand breaks at the ends of TC3 element. The excised element would then be inserted into a target sequence. This Caenorhabditis elegans protein is Transposable element Tc3 transposase (tc3a).